The primary structure comprises 370 residues: Peptidyl-prolyl cis-trans isomerase D (370 aa).

The PPIase cyclophilin-type domain occupies 11-176; that stretch reads FFDISADGKP…EDWIISDCGE (166 aa). TPR repeat units lie at residues 218-251, 269-302, and 307-340; these read VTTL…LNDY, LSCY…EAID, and TKAL…SPED.

This sequence belongs to the cyclophilin-type PPIase family. PPIase D subfamily.

It localises to the cytoplasm. It catalyses the reaction [protein]-peptidylproline (omega=180) = [protein]-peptidylproline (omega=0). In terms of biological role, PPIases accelerate the folding of proteins. It catalyzes the cis-trans isomerization of proline imidic peptide bonds in oligopeptides. The polypeptide is Peptidyl-prolyl cis-trans isomerase D (CPR6) (Debaryomyces hansenii (strain ATCC 36239 / CBS 767 / BCRC 21394 / JCM 1990 / NBRC 0083 / IGC 2968) (Yeast)).